The chain runs to 159 residues: Small ribosomal subunit protein uS7 (159 aa).

It belongs to the universal ribosomal protein uS7 family. Part of the 30S ribosomal subunit. Contacts proteins S9 and S11.

In terms of biological role, one of the primary rRNA binding proteins, it binds directly to 16S rRNA where it nucleates assembly of the head domain of the 30S subunit. Is located at the subunit interface close to the decoding center, probably blocks exit of the E-site tRNA. The sequence is that of Small ribosomal subunit protein uS7 from Sulfurihydrogenibium sp. (strain YO3AOP1).